The primary structure comprises 473 residues: Photosystem II CP43 reaction center protein (473 aa).

A propeptide spanning residues 1 to 14 (MKTLYSLRRFYPVE) is cleaved from the precursor. An N-acetylthreonine modification is found at Thr-15. Residue Thr-15 is modified to Phosphothreonine. 5 helical membrane passes run 69–93 (LFEVAHFVPEKPMYEQGFILLPHLA), 134–155 (LLGPETLEESFPFFGYVWKDRN), 178–200 (KALSFGGVYDTWAPGGGDVRKIT), 255–275 (KPFAWARRALVWSGEAYLSYS), and 291–312 (WFNNTAYPSEFYGPTGPEASQA). Glu-367 lines the [CaMn4O5] cluster pocket. The helical transmembrane segment at 447–471 (RARAAAAGFEKGIDRDFEPVLSMTP) threads the bilayer.

It belongs to the PsbB/PsbC family. PsbC subfamily. As to quaternary structure, PSII is composed of 1 copy each of membrane proteins PsbA, PsbB, PsbC, PsbD, PsbE, PsbF, PsbH, PsbI, PsbJ, PsbK, PsbL, PsbM, PsbT, PsbX, PsbY, PsbZ, Psb30/Ycf12, at least 3 peripheral proteins of the oxygen-evolving complex and a large number of cofactors. It forms dimeric complexes. Binds multiple chlorophylls and provides some of the ligands for the Ca-4Mn-5O cluster of the oxygen-evolving complex. It may also provide a ligand for a Cl- that is required for oxygen evolution. PSII binds additional chlorophylls, carotenoids and specific lipids. is required as a cofactor.

The protein localises to the plastid. It localises to the chloroplast thylakoid membrane. Functionally, one of the components of the core complex of photosystem II (PSII). It binds chlorophyll and helps catalyze the primary light-induced photochemical processes of PSII. PSII is a light-driven water:plastoquinone oxidoreductase, using light energy to abstract electrons from H(2)O, generating O(2) and a proton gradient subsequently used for ATP formation. The chain is Photosystem II CP43 reaction center protein from Pelargonium hortorum (Common geranium).